A 61-amino-acid polypeptide reads, in one-letter code: ORF6 protein (61 aa).

The tract at residues 18 to 24 (IMRTFKV) is important for host Golgi localization.

The protein belongs to the coronaviruses accessory protein 6 family. As to quaternary structure, interacts (via C-terminus) with host RAE1 in the NUP98-RAE1 complex; this interaction disrupts the host nuclear import. Interacts with host KPNA2; this interaction may inhibit IFN-beta production by blocking IRF3 nuclear translocation.

It is found in the host endoplasmic reticulum membrane. The protein resides in the host Golgi apparatus membrane. Disrupts bidirectional nucleocytoplasmic transport by interacting with the host RAE1-NUP98 complex. Disrupts cell nuclear import complex formation by tethering karyopherin alpha 2 and karyopherin beta 1 to the membrane. Retention of import factors at the ER/Golgi membrane leads to a loss of transport into the nucleus. Prevents STAT1 nuclear translocation in response to interferon signaling, thus blocking the expression of interferon stimulated genes (ISGs) that display multiple antiviral activities. Suppresses IFN-beta production possibly by blocking IRF3 nuclear translocation. Might induce accumulation of host HNRNPA1. In terms of biological role, may play a role in viral double membrane vesicles networks to enhance viral replication. The chain is ORF6 protein from Homo sapiens (Human).